Here is a 335-residue protein sequence, read N- to C-terminus: NADP(+)-dependent glycerol-3-phosphate dehydrogenase (335 aa).

Gly137 provides a ligand contact to sn-glycerol 3-phosphate. Ala141 lines the NADPH pocket. Residues Lys192, Asp250, Arg259, and Asn260 each contribute to the sn-glycerol 3-phosphate site. Catalysis depends on Lys192, which acts as the Proton acceptor. Residue Arg259 coordinates NADPH. NADPH contacts are provided by Val287 and Glu289.

The protein belongs to the NAD-dependent glycerol-3-phosphate dehydrogenase family. Homodimer.

The protein resides in the cytoplasm. The enzyme catalyses sn-glycerol 3-phosphate + NADP(+) = dihydroxyacetone phosphate + NADPH + H(+). Catalyzes the reduction of the glycolytic intermediate dihydroxyacetone phosphate (DHAP) to sn-glycerol 3-phosphate (G3P). Shows a 15-fold preference for NADPH over NADH in the reduction process. Can also catalyze the reverse reaction in vitro. Shows no activity with dihydroxyacetone, glycerol, glycerol-2-phosphate, D-glyceraldehyde-3-phosphate, DL-glyceraldehyde, D-erythrose-4-phosphate, D-fructose-6-phosphate, beta-D-glucose-6-phosphate, or alpha-D-galactose-1-phosphate. This is NADP(+)-dependent glycerol-3-phosphate dehydrogenase from Archaeoglobus fulgidus (strain ATCC 49558 / DSM 4304 / JCM 9628 / NBRC 100126 / VC-16).